A 279-amino-acid polypeptide reads, in one-letter code: Coiled-coil domain-containing protein 106 (279 aa).

Residues 62–101 are a coiled coil; the sequence is KAQLHMALERNSWLQKRIEDLEEERDFLRCQLDKFISSAR. The segment covering 109–121 has biased composition (basic and acidic residues); sequence RMKPGPRRVDGDS. Positions 109 to 173 are disordered; it reads RMKPGPRRVD…FGKTKARERQ (65 aa). Position 129 is a phosphoserine (Ser-129). Positions 151–164 match the Bipartite nuclear localization signal motif; sequence KRQKQKGSTSRKRF. The span at 151–167 shows a compositional bias: basic residues; it reads KRQKQKGSTSRKRFGKT.

Interacts with p53/TP53.

The protein resides in the nucleus. Functionally, promotes the degradation of p53/TP53 protein and inhibits its transactivity. The protein is Coiled-coil domain-containing protein 106 (Ccdc106) of Mus musculus (Mouse).